A 600-amino-acid polypeptide reads, in one-letter code: Proline--tRNA ligase (600 aa).

Belongs to the class-II aminoacyl-tRNA synthetase family. ProS type 1 subfamily. In terms of assembly, homodimer.

It localises to the cytoplasm. It carries out the reaction tRNA(Pro) + L-proline + ATP = L-prolyl-tRNA(Pro) + AMP + diphosphate. Catalyzes the attachment of proline to tRNA(Pro) in a two-step reaction: proline is first activated by ATP to form Pro-AMP and then transferred to the acceptor end of tRNA(Pro). As ProRS can inadvertently accommodate and process non-cognate amino acids such as alanine and cysteine, to avoid such errors it has two additional distinct editing activities against alanine. One activity is designated as 'pretransfer' editing and involves the tRNA(Pro)-independent hydrolysis of activated Ala-AMP. The other activity is designated 'posttransfer' editing and involves deacylation of mischarged Ala-tRNA(Pro). The misacylated Cys-tRNA(Pro) is not edited by ProRS. The chain is Proline--tRNA ligase from Prochlorococcus marinus (strain AS9601).